A 240-amino-acid polypeptide reads, in one-letter code: Demethylmenaquinone methyltransferase (240 aa).

S-adenosyl-L-methionine is bound by residues Thr62, Asp80, 102-103, and Ser119; that span reads DA.

The protein belongs to the class I-like SAM-binding methyltransferase superfamily. MenG/UbiE family.

The enzyme catalyses a 2-demethylmenaquinol + S-adenosyl-L-methionine = a menaquinol + S-adenosyl-L-homocysteine + H(+). Its pathway is quinol/quinone metabolism; menaquinone biosynthesis; menaquinol from 1,4-dihydroxy-2-naphthoate: step 2/2. In terms of biological role, methyltransferase required for the conversion of demethylmenaquinol (DMKH2) to menaquinol (MKH2). This is Demethylmenaquinone methyltransferase from Beutenbergia cavernae (strain ATCC BAA-8 / DSM 12333 / CCUG 43141 / JCM 11478 / NBRC 16432 / NCIMB 13614 / HKI 0122).